A 1255-amino-acid chain; its full sequence is Membrane-associated guanylate kinase, WW and PDZ domain-containing protein 1 (1255 aa).

The PDZ 1 domain occupies 17 to 105 (ECTVKRGPQG…AVTFKAVRQG (89 aa)). The Guanylate kinase-like domain maps to 96–287 (AVTFKAVRQG…APITDPSQKF (192 aa)). 103–110 (RQGGRLNK) is a binding site for ATP. Disordered regions lie at residues 208-227 (HSLQ…SYND) and 235-265 (HTEN…TLQE). The region spanning 300–333 (GPLPENWEMAYTENGEVYFIDHNAKTTSWLDPRC) is the WW 1 domain. Serine 357 carries the phosphoserine modification. The WW 2 domain maps to 359 to 392 (LELPAGWEKIEDPVYGVYYVDHINRKTQYENPVL). Residues 395-462 (KRKRQLEQQQ…QGKPFFTRNP (68 aa)) form a disordered region. Residues 402–414 (QQQQQQQHQQQPQ) are compositionally biased toward low complexity. Residues 434–444 (PVAPSHPPSNP) are compositionally biased toward pro residues. Residues 471–553 (HTKLRKSSRG…GASVDLELCR (83 aa)) form the PDZ 2 domain. Residues 585 to 601 (QETYDSPASHSSKTGKV) show a composition bias toward polar residues. Disordered stretches follow at residues 585-622 (QETY…SSHG) and 719-820 (QRGG…GERD). The PDZ 3 domain occupies 642 to 720 (TVHIVKGPMG…GSEVTLLVQR (79 aa)). A phosphoserine mark is found at serine 729 and serine 740. The segment covering 741–755 (QNSSQHSVSSLRSLH) has biased composition (low complexity). Phosphoserine is present on serine 799. Residues 840-922 (DIFLWRKETG…QGHVNLTVRR (83 aa)) enclose the PDZ 4 domain. The interval 932-984 (ENEVPSPASSHHSSNQPASLTEEKRTPQGSQNSLNTVSSGSGSTSGIGSGGGG) is disordered. Polar residues-rich tracts occupy residues 938-950 (PASS…QPAS) and 958-967 (PQGSQNSLNT). Positions 974–984 (STSGIGSGGGG) are enriched in gly residues. The PDZ 5 domain maps to 997-1093 (DVEIRRGENE…TVTLRIIPGD (97 aa)). Position 1070 is a phosphoserine (serine 1070). A compositionally biased stretch (polar residues) spans 1111 to 1129 (TTTHAPSQQGTQETRTTTK). The tract at residues 1111–1142 (TTTHAPSQQGTQETRTTTKPKPDSQFEFKGPQ) is disordered. The PDZ 6 domain maps to 1151 to 1233 (TVELERGAKG…RVRLFLRRGD (83 aa)).

Part of a complex composed of AMOTL2, MAGI1 and CDH5, within the complex AMOTL2 acts as a scaffold protein for the interaction of MAGI1 with CDH5. The complex is required for coupling actin fibers to cell junctions in endothelial cells. Interacts through its WW 2 domain with SYNPO and through its PDZ 5 domain with ACTN4. Interacts with cytoplasmic domain of ADGRB1. Interacts via its WW domains with DRPLA. Interacts with ESAM, LRP2 and CXADR. May interact with CTNNB1. Interacts through its PDZ 1 domain with NET1. Interacts with ASIC3 and AMOT. Interacts with FCHSD2. Interacts with IGSF5/JAM4 and through its PDZ 2 and 3 domains with NPHS1 forming a tripartite complex. Interacts with DDN. May interact (via PDZ domain) with RAPGEF2. Interacts with DLL1. Interacts with KCNJ10 and possibly with KCNJ10/KCNJ16 heterodimer; this interaction may facilitate KCNJ10/KCNJ16 potassium channel expression at the basolateral membrane in kidney tubular cells. Interacts with PRRG4 (via cytoplasmic domain).

Its subcellular location is the cell junction. The protein localises to the tight junction. It is found in the cytoplasm. The protein resides in the membrane. Functionally, plays a role in coupling actin fibers to cell junctions in endothelial cells, via its interaction with AMOTL2 and CDH5. May regulate acid-induced ASIC3 currents by modulating its expression at the cell surface. The protein is Membrane-associated guanylate kinase, WW and PDZ domain-containing protein 1 (Magi1) of Rattus norvegicus (Rat).